The primary structure comprises 600 residues: ATP-dependent lipid A-core flippase (600 aa).

A run of 4 helical transmembrane segments spans residues 26 to 46 (VGIFLLSIIGFVIFASTQPML), 82 to 102 (LLIVLIAAWQGLGSFLGNYFL), 167 to 187 (VFLFIYLLMMNWKLTLVMLAI), and 266 to 286 (PMLQLVIYSAMAVLMFLVLFL). Residues 30–321 (LLSIIGFVIF…LSEVSSTIQK (292 aa)) enclose the ABC transmembrane type-1 domain. The ABC transporter domain occupies 353–589 (LEVKNLSFFY…NGYYARLHAM (237 aa)). Residue 387–394 (GRSGSGKS) coordinates ATP.

The protein belongs to the ABC transporter superfamily. Lipid exporter (TC 3.A.1.106) family. In terms of assembly, homodimer.

The protein localises to the cell inner membrane. The enzyme catalyses ATP + H2O + lipid A-core oligosaccharideSide 1 = ADP + phosphate + lipid A-core oligosaccharideSide 2.. Its function is as follows. Involved in lipopolysaccharide (LPS) biosynthesis. Translocates lipid A-core from the inner to the outer leaflet of the inner membrane. Transmembrane domains (TMD) form a pore in the inner membrane and the ATP-binding domain (NBD) is responsible for energy generation. The sequence is that of ATP-dependent lipid A-core flippase from Pseudomonas syringae pv. syringae (strain B728a).